Consider the following 305-residue polypeptide: Energy-coupling factor transporter ATP-binding protein EcfA2 (305 aa).

The ABC transporter domain maps to 13–262 (LQNVDITFTN…KNLLQELLIE (250 aa)). Position 55–62 (55–62 (GSTGSGKS)) interacts with ATP.

This sequence belongs to the ABC transporter superfamily. Energy-coupling factor EcfA family. Forms a stable energy-coupling factor (ECF) transporter complex composed of 2 membrane-embedded substrate-binding proteins (S component), 2 ATP-binding proteins (A component) and 2 transmembrane proteins (T component).

It localises to the cell membrane. Functionally, ATP-binding (A) component of a common energy-coupling factor (ECF) ABC-transporter complex. Unlike classic ABC transporters this ECF transporter provides the energy necessary to transport a number of different substrates. The protein is Energy-coupling factor transporter ATP-binding protein EcfA2 of Spiroplasma kunkelii.